A 120-amino-acid chain; its full sequence is Protein VraC (120 aa).

This Staphylococcus epidermidis (strain ATCC 35984 / DSM 28319 / BCRC 17069 / CCUG 31568 / BM 3577 / RP62A) protein is Protein VraC.